The primary structure comprises 105 residues: UPF0235 protein RrIowa_1526 (105 aa).

Belongs to the UPF0235 family.

The protein is UPF0235 protein RrIowa_1526 of Rickettsia rickettsii (strain Iowa).